The chain runs to 568 residues: Proline--tRNA ligase (568 aa).

The protein belongs to the class-II aminoacyl-tRNA synthetase family. ProS type 1 subfamily. In terms of assembly, homodimer.

The protein localises to the cytoplasm. The enzyme catalyses tRNA(Pro) + L-proline + ATP = L-prolyl-tRNA(Pro) + AMP + diphosphate. In terms of biological role, catalyzes the attachment of proline to tRNA(Pro) in a two-step reaction: proline is first activated by ATP to form Pro-AMP and then transferred to the acceptor end of tRNA(Pro). As ProRS can inadvertently accommodate and process non-cognate amino acids such as alanine and cysteine, to avoid such errors it has two additional distinct editing activities against alanine. One activity is designated as 'pretransfer' editing and involves the tRNA(Pro)-independent hydrolysis of activated Ala-AMP. The other activity is designated 'posttransfer' editing and involves deacylation of mischarged Ala-tRNA(Pro). The misacylated Cys-tRNA(Pro) is not edited by ProRS. The polypeptide is Proline--tRNA ligase (Alkalilimnicola ehrlichii (strain ATCC BAA-1101 / DSM 17681 / MLHE-1)).